The sequence spans 294 residues: NADH-cytochrome b5 reductase 2 (294 aa).

Residues 11 to 27 traverse the membrane as a helical segment; the sequence is VLLPVVAAATSIGLVYH. Positions 45–149 constitute an FAD-binding FR-type domain; that stretch reads DEWIDLKLKK…KGPIVKWKWE (105 aa). 152-187 lines the FAD pocket; the sequence is QFQSIALIGGGTGITPLYQLLHEITKNPEDKTKVKL.

The protein belongs to the flavoprotein pyridine nucleotide cytochrome reductase family. Requires FAD as cofactor.

It is found in the mitochondrion outer membrane. The catalysed reaction is 2 Fe(III)-[cytochrome b5] + NADH = 2 Fe(II)-[cytochrome b5] + NAD(+) + H(+). Functionally, may mediate the reduction of outer membrane cytochrome b5. The sequence is that of NADH-cytochrome b5 reductase 2 (MCR1) from Meyerozyma guilliermondii (strain ATCC 6260 / CBS 566 / DSM 6381 / JCM 1539 / NBRC 10279 / NRRL Y-324) (Yeast).